A 230-amino-acid chain; its full sequence is Isoprenyl transferase (230 aa).

Aspartate 14 is an active-site residue. Aspartate 14 is a Mg(2+) binding site. Residues 15–18, tryptophan 19, arginine 27, histidine 31, and 59–61 contribute to the substrate site; these read GNGR and STE. Asparagine 62 serves as the catalytic Proton acceptor. Substrate contacts are provided by residues tryptophan 63, arginine 65, arginine 175, and 181–183; that span reads RIS. Residue glutamate 194 coordinates Mg(2+).

Belongs to the UPP synthase family. Homodimer. The cofactor is Mg(2+).

In terms of biological role, catalyzes the condensation of isopentenyl diphosphate (IPP) with allylic pyrophosphates generating different type of terpenoids. The chain is Isoprenyl transferase from Fusobacterium nucleatum subsp. nucleatum (strain ATCC 25586 / DSM 15643 / BCRC 10681 / CIP 101130 / JCM 8532 / KCTC 2640 / LMG 13131 / VPI 4355).